Reading from the N-terminus, the 123-residue chain is Large ribosomal subunit protein bL12 (123 aa).

Belongs to the bacterial ribosomal protein bL12 family. In terms of assembly, homodimer. Part of the ribosomal stalk of the 50S ribosomal subunit. Forms a multimeric L10(L12)X complex, where L10 forms an elongated spine to which 2 to 4 L12 dimers bind in a sequential fashion. Binds GTP-bound translation factors.

Its function is as follows. Forms part of the ribosomal stalk which helps the ribosome interact with GTP-bound translation factors. Is thus essential for accurate translation. This Borrelia duttonii (strain Ly) protein is Large ribosomal subunit protein bL12.